The chain runs to 779 residues: Endonuclease MutS2 (779 aa).

328–335 serves as a coordination point for ATP; that stretch reads GPNTGGKT. Residues 704 to 779 enclose the Smr domain; that stretch reads LDLRGKRYEE…GSGATIVTLG (76 aa).

This sequence belongs to the DNA mismatch repair MutS family. MutS2 subfamily. In terms of assembly, homodimer. Binds to stalled ribosomes, contacting rRNA.

Functionally, endonuclease that is involved in the suppression of homologous recombination and thus may have a key role in the control of bacterial genetic diversity. In terms of biological role, acts as a ribosome collision sensor, splitting the ribosome into its 2 subunits. Detects stalled/collided 70S ribosomes which it binds and splits by an ATP-hydrolysis driven conformational change. Acts upstream of the ribosome quality control system (RQC), a ribosome-associated complex that mediates the extraction of incompletely synthesized nascent chains from stalled ribosomes and their subsequent degradation. Probably generates substrates for RQC. This Streptococcus pyogenes serotype M1 protein is Endonuclease MutS2.